The sequence spans 819 residues: MMNLEKNFDKTTLFNHMRTDKRGKCSDLNEYGTSCDKTTAVEYNKVHMAMTHYECNERGINFSRKSPLTQSQRTITGWSAFESNKCEENFSQSSAHIVHQKTQAGDKFGEHNECTDALYQKLDFTAHQRIHTDFTAHQKFYLSDEHGKCRKSFYWKAHLIQHERPHSGEKTYQYEECAKSFCSSSHPIQHPGTYVGFKLYECNECGKAFCQNSNLSKHLRIHTKEKPCDNNGCGRSYKSPLIGHQKTDAEMELCGGSEYGKTSHLKGHQRILMGEKPYECIECGKTFSKTSHLRAHQRIHTGEKPYECVECEKTFSHKTHLSVHQRVHTGEKPYECNDCGKSFTYNSALRAHQRIHTGEKPYECSDCEKTFAHNSALRAHHRIHTGEKPYECNECGRSFAHISVLKAHQRIHTREKPYECNECGRSFTYNSALRAHQRIHTGRKPYECSDCEKTFAHNSALKIHQRIHTGEKPYKCNECEKTFAHNSALRAHQNIHTGEKLYECSECGKTFFQKTRLSTHRRIHTGEKPYECSKCGKTFSQKSYLSGHERIHTGEKPYECNVCGKTFVYKAALIVHQRIHTGEKPYECNECGKTFSQRTHLCAHQRIHTGEKPYECNECGKTFADNSALRAHHRIHTGEKPYECNDCGKTFSKTSHLRAHLRTRSGEKPYECSECGKTFSEKSYVSAHQRVHTGEKPYECNVCGKPFAHNSTLRVHQRIHTGEKSYECNDCGKTFSQKSHLSAHQRIHTGEKPYECNECGKAFAQNSTLRVHQRIHTGEKPYECDECGKTFVRKAALRVHHTRMHTREKTLACNGFGKS.

The C2H2-type 1; degenerate zinc finger occupies 141 to 166 (YLSDEHGKCRKSFYWKAHLIQHERPH). 14 C2H2-type zinc fingers span residues 200 to 222 (YECN…LRIH), 278 to 300 (YECI…QRIH), 306 to 328 (YECV…QRVH), 334 to 356 (YECN…QRIH), 362 to 384 (YECS…HRIH), 390 to 412 (YECN…QRIH), 418 to 440 (YECN…QRIH), 446 to 468 (YECS…QRIH), 474 to 496 (YKCN…QNIH), 502 to 524 (YECS…RRIH), 530 to 552 (YECS…ERIH), 558 to 580 (YECN…QRIH), 586 to 608 (YECN…QRIH), and 614 to 636 (YECN…HRIH). Residues 642-664 (YECNDCGKTFSKTSHLRAHLRTR) form a C2H2-type 16; degenerate zinc finger. 5 consecutive C2H2-type zinc fingers follow at residues 670-692 (YECS…QRVH), 698-720 (YECN…QRIH), 726-748 (YECN…QRIH), 754-776 (YECN…QRIH), and 782-805 (YECD…TRMH).

The protein belongs to the krueppel C2H2-type zinc-finger protein family.

Its subcellular location is the nucleus. In terms of biological role, may be involved in transcriptional regulation. In Homo sapiens (Human), this protein is Zinc finger protein 658B (ZNF658B).